Reading from the N-terminus, the 487-residue chain is Histamine H1 receptor (487 aa).

At 1-29 (MSLPNSSCLLEDKMCEGNKTTMASPQLMP) the chain is on the extracellular side. N-linked (GlcNAc...) asparagine glycosylation is found at N5 and N18. Residues 30–50 (LVVVLSTISLVTVGLNLLVLY) form a helical membrane-spanning segment. Topologically, residues 51–64 (AVRSERKLHTVGNL) are cytoplasmic. Residues 65-89 (YIVSLSVADLIVGAVVMPMNILYLL) traverse the membrane as a helical segment. Topologically, residues 90–97 (MSKWSLGR) are extracellular. The helical transmembrane segment at 98 to 123 (PLCLFWLSMDYVASTASIFSVFILCI) threads the bilayer. A disulfide bond links C100 and C180. Residues D107 and T112 each coordinate histamine. The tract at residues 107-112 (DYVAST) is important for agonist binding. Residues 124-144 (DRYRSVQQPLRYLKYRTKTRA) are Cytoplasmic-facing. Phosphothreonine is present on residues T140 and T142. A helical transmembrane segment spans residues 145-164 (SATILGAWFLSFLWVIPILG). The Extracellular portion of the chain corresponds to 165–188 (WNHFRQQISVRREDKCETDFYDVT). Residues 189 to 211 (WFKVMTAIINFYLPTLLMLWFYA) form a helical membrane-spanning segment. N198 contacts histamine. At 212–416 (KIYKAVQKHC…MNRERKAAKQ (205 aa)) the chain is on the cytoplasmic side. S230 carries the phosphoserine modification. The span at 238–261 (KLRPENPKGDAKKPGKESPWEVLK) shows a compositional bias: basic and acidic residues. Positions 238 to 286 (KLRPENPKGDAKKPGKESPWEVLKRKPKDAGGGSVLKSPSQTPKEMKSP) are disordered. T279 bears the Phosphothreonine mark. A phosphoserine mark is found at S344 and S347. A disordered region spans residues 345 to 379 (EISEDQMLGDSQSFSRTDSDTTTETAPGKGKLRSG). Residues 353–369 (GDSQSFSRTDSDTTTET) are compositionally biased toward polar residues. 3 positions are modified to phosphoserine: S380, S396, and S398. A helical transmembrane segment spans residues 417 to 440 (LGFIMAAFILCWIPYFIFFMVIAF). Residues 424–428 (FILCW) are important for agonist binding. Residue Y431 coordinates histamine. The cysteines at positions 441 and 444 are disulfide-linked. At 441–446 (CKNCCN) the chain is on the extracellular side. A helical membrane pass occupies residues 447 to 469 (EHLHMFTIWLGYINSTLNPLIYP). Over 470–487 (LCNENFKKTFKRILHIRS) the chain is Cytoplasmic.

This sequence belongs to the G-protein coupled receptor 1 family. Phosphorylation at sites in the second and third cytoplasmic loops independently contribute to agonist-induced receptor down-regulation.

It localises to the cell membrane. Functionally, G-protein-coupled receptor for histamine, a biogenic amine that functions as an immune modulator and a neurotransmitter. Through the H1 receptor, histamine mediates the contraction of smooth muscles and increases capillary permeability due to contraction of terminal venules. Also mediates neurotransmission in the central nervous system and thereby regulates circadian rhythms, emotional and locomotor activities as well as cognitive functions. This is Histamine H1 receptor from Pongo pygmaeus (Bornean orangutan).